The primary structure comprises 562 residues: Probable malate:quinone oxidoreductase (562 aa).

Residues 530-562 are disordered; it reads EVPDKSATPPDPTIAPKHQHSPTHNANSEMQAL. A compositionally biased stretch (polar residues) spans 551–562; it reads PTHNANSEMQAL.

The protein belongs to the MQO family. It depends on FAD as a cofactor.

It catalyses the reaction (S)-malate + a quinone = a quinol + oxaloacetate. Its pathway is carbohydrate metabolism; tricarboxylic acid cycle; oxaloacetate from (S)-malate (quinone route): step 1/1. This Xylella fastidiosa (strain 9a5c) protein is Probable malate:quinone oxidoreductase.